Consider the following 313-residue polypeptide: Protein TIFY 4A (313 aa).

A disordered region spans residues serine 118–glutamate 149. In terms of domain architecture, Tify spans threonine 150–asparagine 185. Disordered stretches follow at residues lysine 220–lysine 256 and glutamine 281–isoleucine 313. The Jas signature appears at glutamine 232–alanine 254. A Nuclear localization signal motif is present at residues asparagine 234 to arginine 241. Residues arginine 243–lysine 256 show a composition bias toward basic residues.

It belongs to the TIFY/JAZ family. Interacts with AFPH2/NINJA.

Its subcellular location is the nucleus. Regulates the arrest of dispersed meristematic cells during lamina development. This chain is Protein TIFY 4A (TIFY4A), found in Arabidopsis thaliana (Mouse-ear cress).